The primary structure comprises 258 residues: MLCLVVCCLIWLISALDGSCSEPPPVNNSVFVGKETEEQILGIYLCIKGYHLVGKKSLVFDPSKEWNSTLPECLLGHCPDPVLENGKINSSGPVNISGKIMFECNDGYILKGSNWSQCLEDHTWAPPLPICRSRDCEPPETPVHGYFEGETFTSGSVVTYYCEDGYHLVGTQKVQCSDGEWSPSYPTCESIQEPPKSAEQSALEKAILAFQESKDLCNATENFVRQLREGGITMEELKCSLEMKKTKLKSDILLNYHS.

The N-terminal stretch at 1-15 (MLCLVVCCLIWLISA) is a signal peptide. A Sushi 1; atypical; lacks a Cys domain is found at 18 to 75 (GSCSEPPPVNNSVFVGKETEEQILGIYLCIKGYHLVGKKSLVFDPSKEWNSTLPECLL). N-linked (GlcNAc...) asparagine glycans are attached at residues asparagine 27, asparagine 67, asparagine 89, asparagine 95, and asparagine 114. 5 disulfides stabilise this stretch: cysteine 46-cysteine 73, cysteine 78-cysteine 118, cysteine 104-cysteine 131, cysteine 136-cysteine 176, and cysteine 162-cysteine 188. Sushi domains are found at residues 76 to 133 (GHCP…ICRS) and 134 to 190 (RDCE…TCES). Asparagine 218 carries N-linked (GlcNAc...) asparagine glycosylation.

As to quaternary structure, disulfide-linked complex of alpha and beta chains.

Its subcellular location is the secreted. Controls the classical pathway of complement activation. It binds as a cofactor to C3b/C4b inactivator (C3bINA), which then hydrolyzes the complement fragment C4b. It also accelerates the degradation of the C4bC2a complex (C3 convertase) by dissociating the complement fragment C2a. It also interacts with anticoagulant protein S and with serum amyloid P component. This is C4b-binding protein beta chain (C4bpb) from Rattus norvegicus (Rat).